Reading from the N-terminus, the 699-residue chain is tRNA(Met) cytidine acetyltransferase TmcA (699 aa).

Residues Q178, 200–209 (GRGKSTLAGM), and R322 each bind ATP. In terms of domain architecture, N-acetyltransferase spans 408 to 547 (MHIASAQVAG…SGCYSAMAIL (140 aa)). Acetyl-CoA contacts are provided by residues 475 to 477 (IAV) and 482 to 488 (RRQGIGR).

Belongs to the RNA cytidine acetyltransferase family. TmcA subfamily.

It is found in the cytoplasm. It catalyses the reaction cytidine(34) in elongator tRNA(Met) + acetyl-CoA + ATP + H2O = N(4)-acetylcytidine(34) in elongator tRNA(Met) + ADP + phosphate + CoA + H(+). Its function is as follows. Catalyzes the formation of N(4)-acetylcytidine (ac(4)C) at the wobble position of tRNA(Met), by using acetyl-CoA as an acetyl donor and ATP (or GTP). The protein is tRNA(Met) cytidine acetyltransferase TmcA of Pectobacterium atrosepticum (strain SCRI 1043 / ATCC BAA-672) (Erwinia carotovora subsp. atroseptica).